The chain runs to 1143 residues: FH2 domain-containing protein 1 (1143 aa).

The tract at residues 16-89 (GNIATAPGFM…PPTTHMNGYS (74 aa)) is disordered. 2 stretches are compositionally biased toward pro residues: residues 29–46 (TPPPAPPPPPPPPPPSPP) and 56–80 (SSPPPPPPPPLPGEPPIPPPPPGLP). Residues 87-482 (GYSHLGKKKR…QLQRLKEQEQ (396 aa)) enclose the FH2 domain. Residue Ser500 is modified to Phosphoserine. The disordered stretch occupies residues 517 to 638 (PFLHPRPISP…NHASAFPRAR (122 aa)). A compositionally biased stretch (low complexity) spans 521–534 (PRPISPSSPSYRPP). Phosphoserine occurs at positions 650, 660, and 664. The interval 706 to 1143 (LESVGHRGPQ…LGRILNPLRK (438 aa)) is disordered. Positions 806 to 818 (GSMSSGVGEMGDS) are enriched in low complexity. Basic and acidic residues predominate over residues 848–861 (LPRDKPTKRKDVVA). Residues 925–947 (RGPSQNPPSSTDTVWSRQNSVRR) are compositionally biased toward polar residues. Over residues 958 to 968 (PRGSSGSSSTR) the composition is skewed to low complexity. Residues 960 to 1086 (GSSGSSSTRP…DAAPKDSSTL (127 aa)) form an MTBD; microtubule-binding domain region. Positions 995-1018 (QKPEENKTCRAHSEGPESPKEEPK) are enriched in basic and acidic residues. Over residues 1036 to 1046 (ARNTVASSSRS) the composition is skewed to polar residues. Composition is skewed to basic and acidic residues over residues 1071–1080 (VKGDPEDAAP) and 1117–1130 (GAGERASLRRKDSS).

In terms of assembly, interacts with CEP170.

Its subcellular location is the cell projection. It localises to the cilium. It is found in the golgi apparatus. Microtubule-associated formin which regulates both actin and microtubule dynamics. Induces microtubule acetylation and stabilization and actin stress fiber formation. Regulates Golgi ribbon formation. Required for normal cilia assembly. Early in cilia assembly, may assist in the maturation and positioning of the centrosome/basal body, and once cilia assembly has initiated, may also promote cilia elongation by inhibiting disassembly. This is FH2 domain-containing protein 1 (FHDC1) from Homo sapiens (Human).